A 373-amino-acid polypeptide reads, in one-letter code: Peptidoglycan recognition protein 4 (373 aa).

Residues 1 to 17 form the signal peptide; it reads MLPWLLVFSALGIQAWG. N22, N39, N109, N145, and N247 each carry an N-linked (GlcNAc...) asparagine glycan. N-acetylmuramoyl-L-alanine amidase domains follow at residues 74 to 212 and 235 to 358; these read TPVN…ACPG and YGII…LSPG. 3 cysteine pairs are disulfide-bonded: C210-C332, C226-C270, and C246-C252. Peptidoglycan-binding residues include Y263 and Y274. Interaction with murein regions lie at residues 293 to 302 and 353 to 354; these read QGSSTPGYDD and RT.

This sequence belongs to the N-acetylmuramoyl-L-alanine amidase 2 family. As to quaternary structure, homodimer; disulfide-linked. Heterodimer with PGLYRP3; disulfide-linked. In terms of processing, N-glycosylated. As to expression, detected in skin epidermis, eccrine sweat glands and ducts, mucous cells in the submandibular salivary gland, mucous cells in the throat, ciliary body epithelial cells of the eye, small intestine, colon, stomach and in mature epithelial cells of the tongue (at protein level). High expression in skin and esophagus. Expressed also to a much lesser extent in the tonsils and thymus.

The protein resides in the secreted. In terms of biological role, pattern receptor that binds to murein peptidoglycans (PGN) of Gram-positive bacteria. Has bactericidal activity towards Gram-positive bacteria. May kill Gram-positive bacteria by interfering with peptidoglycan biosynthesis. Also binds to Gram-negative bacteria, and has bacteriostatic activity towards Gram-negative bacteria. Plays a role in innate immunity. The chain is Peptidoglycan recognition protein 4 (PGLYRP4) from Homo sapiens (Human).